Here is a 105-residue protein sequence, read N- to C-terminus: Secreted RxLR effector protein 158 (105 aa).

The first 22 residues, 1-22 (MRGAHYVAIVLLVAAGGQTAAG), serve as a signal peptide directing secretion. Positions 50–71 (RALQASRNPKDDLMFSAGDEER) match the RxLR-dEER motif.

Belongs to the RxLR effector family.

It is found in the secreted. The protein resides in the host nucleus. The protein localises to the host cytoplasm. Functionally, secreted effector that partially suppresses the host cell death induced by cell death-inducing proteins. This Plasmopara viticola (Downy mildew of grapevine) protein is Secreted RxLR effector protein 158.